We begin with the raw amino-acid sequence, 54 residues long: uncharacterized protein (54 aa).

It belongs to the ycf18/nblA family.

It localises to the plastid. Its subcellular location is the chloroplast. This is an uncharacterized protein from Cyanidium caldarium (Red alga).